A 176-amino-acid polypeptide reads, in one-letter code: Nucleoside triphosphate/diphosphate phosphatase (176 aa).

The active-site Proton donor is Arg-23. Residues Asn-87, Asp-103, Asp-105, Asp-107, Asp-120, and Glu-123 each contribute to the Mg(2+) site.

It belongs to the Ntdp family. Mg(2+) serves as cofactor.

The enzyme catalyses a ribonucleoside 5'-triphosphate + H2O = a ribonucleoside 5'-diphosphate + phosphate + H(+). The catalysed reaction is a ribonucleoside 5'-diphosphate + H2O = a ribonucleoside 5'-phosphate + phosphate + H(+). Its function is as follows. Has nucleoside phosphatase activity towards nucleoside triphosphates and nucleoside diphosphates. The protein is Nucleoside triphosphate/diphosphate phosphatase (yjjG) of Lactococcus lactis subsp. lactis (strain IL1403) (Streptococcus lactis).